The primary structure comprises 321 residues: Nucleotide-binding protein GOX0815 (321 aa).

Gly-27–Ser-34 serves as a coordination point for ATP. A GTP-binding site is contributed by Asp-72–Ser-75.

The protein belongs to the RapZ-like family.

Displays ATPase and GTPase activities. This is Nucleotide-binding protein GOX0815 from Gluconobacter oxydans (strain 621H) (Gluconobacter suboxydans).